We begin with the raw amino-acid sequence, 82 residues long: NAD(P)H-quinone oxidoreductase subunit O (82 aa).

Belongs to the complex I NdhO subunit family. NDH-1 can be composed of about 15 different subunits; different subcomplexes with different compositions have been identified which probably have different functions.

It localises to the cellular thylakoid membrane. The enzyme catalyses a plastoquinone + NADH + (n+1) H(+)(in) = a plastoquinol + NAD(+) + n H(+)(out). It catalyses the reaction a plastoquinone + NADPH + (n+1) H(+)(in) = a plastoquinol + NADP(+) + n H(+)(out). Its function is as follows. NDH-1 shuttles electrons from an unknown electron donor, via FMN and iron-sulfur (Fe-S) centers, to quinones in the respiratory and/or the photosynthetic chain. The immediate electron acceptor for the enzyme in this species is believed to be plastoquinone. Couples the redox reaction to proton translocation, and thus conserves the redox energy in a proton gradient. Cyanobacterial NDH-1 also plays a role in inorganic carbon-concentration. This Prochlorococcus marinus (strain MIT 9211) protein is NAD(P)H-quinone oxidoreductase subunit O.